The chain runs to 1069 residues: Degenerin-like protein del-10 (1069 aa).

Residues 1–95 (MVRMAERLAE…LNAASPVTRG (95 aa)) are Cytoplasmic-facing. Residues 96 to 116 (LWCMIIIAFVILVLVQCYSQI) traverse the membrane as a helical segment. Over 117 to 830 (KLYISEPVAT…FWSLACDIGG (714 aa)) the chain is Extracellular. 7 N-linked (GlcNAc...) asparagine glycosylation sites follow: Asn-216, Asn-290, Asn-374, Asn-454, Asn-539, Asn-545, and Asn-584. Residues 831–851 (ALGLFLGASLLTIIEIVYLCI) traverse the membrane as a helical segment. Topologically, residues 852–1069 (QYGLCGKRAR…EEDDDKHSYV (218 aa)) are cytoplasmic. Disordered regions lie at residues 898–948 (KKSQ…TLTP) and 960–1069 (RNSQ…HSYV). Residues 915–928 (GDKFRSRASSEESK) show a composition bias toward basic and acidic residues. Polar residues predominate over residues 938–948 (NDPSGNSTLTP). Positions 967–978 (YHDDHHPEDHYY) are enriched in basic and acidic residues.

This sequence belongs to the amiloride-sensitive sodium channel (TC 1.A.6) family.

It is found in the membrane. This is Degenerin-like protein del-10 from Caenorhabditis elegans.